Reading from the N-terminus, the 192-residue chain is Large ribosomal subunit protein uL3 (192 aa).

Belongs to the universal ribosomal protein uL3 family. Part of the 50S ribosomal subunit. Forms a cluster with proteins L14 and L19.

One of the primary rRNA binding proteins, it binds directly near the 3'-end of the 23S rRNA, where it nucleates assembly of the 50S subunit. The sequence is that of Large ribosomal subunit protein uL3 (rplC) from Wolinella succinogenes (strain ATCC 29543 / DSM 1740 / CCUG 13145 / JCM 31913 / LMG 7466 / NCTC 11488 / FDC 602W) (Vibrio succinogenes).